We begin with the raw amino-acid sequence, 442 residues long: Proline--tRNA ligase (442 aa).

This sequence belongs to the class-II aminoacyl-tRNA synthetase family. ProS type 2 subfamily. Homodimer.

Its subcellular location is the cytoplasm. The catalysed reaction is tRNA(Pro) + L-proline + ATP = L-prolyl-tRNA(Pro) + AMP + diphosphate. Its function is as follows. Catalyzes the attachment of proline to tRNA(Pro) in a two-step reaction: proline is first activated by ATP to form Pro-AMP and then transferred to the acceptor end of tRNA(Pro). In Brucella suis (strain ATCC 23445 / NCTC 10510), this protein is Proline--tRNA ligase.